The sequence spans 170 residues: ATP synthase subunit b (170 aa).

A helical transmembrane segment spans residues 11-31 (AFTFGDAFFTLFAFAILLVLI).

The protein belongs to the ATPase B chain family. F-type ATPases have 2 components, F(1) - the catalytic core - and F(0) - the membrane proton channel. F(1) has five subunits: alpha(3), beta(3), gamma(1), delta(1), epsilon(1). F(0) has three main subunits: a(1), b(2) and c(10-14). The alpha and beta chains form an alternating ring which encloses part of the gamma chain. F(1) is attached to F(0) by a central stalk formed by the gamma and epsilon chains, while a peripheral stalk is formed by the delta and b chains.

It is found in the cell membrane. In terms of biological role, f(1)F(0) ATP synthase produces ATP from ADP in the presence of a proton or sodium gradient. F-type ATPases consist of two structural domains, F(1) containing the extramembraneous catalytic core and F(0) containing the membrane proton channel, linked together by a central stalk and a peripheral stalk. During catalysis, ATP synthesis in the catalytic domain of F(1) is coupled via a rotary mechanism of the central stalk subunits to proton translocation. Component of the F(0) channel, it forms part of the peripheral stalk, linking F(1) to F(0). The chain is ATP synthase subunit b from Listeria welshimeri serovar 6b (strain ATCC 35897 / DSM 20650 / CCUG 15529 / CIP 8149 / NCTC 11857 / SLCC 5334 / V8).